A 61-amino-acid chain; its full sequence is Large ribosomal subunit protein bL28 (61 aa).

Belongs to the bacterial ribosomal protein bL28 family.

The polypeptide is Large ribosomal subunit protein bL28 (Lacticaseibacillus paracasei (strain ATCC 334 / BCRC 17002 / CCUG 31169 / CIP 107868 / KCTC 3260 / NRRL B-441) (Lactobacillus paracasei)).